A 181-amino-acid chain; its full sequence is Acetylcholinesterase (181 aa).

The active-site Acyl-ester intermediate is the S76. Residue E132 is the Charge relay system of the active site. The segment at W162 to N181 is disordered.

It belongs to the type-B carboxylesterase/lipase family. The N-terminus is blocked. As to expression, expressed by the venom gland. Is also probably expressed by liver and muscle.

It localises to the synapse. The protein resides in the secreted. It is found in the cell membrane. It catalyses the reaction acetylcholine + H2O = choline + acetate + H(+). In venom, its toxic role is unclear: it could result in less musculatory control by rapidly hydrolyzing acetylcholine, or that it works synergistically with alkaline phosphatase (ALP) in paralyzing prey through hypotension. In muscle, it terminates signal transduction at the neuromuscular junction by rapid hydrolysis of the acetylcholine released into the synaptic cleft. In liver, its function is unclear: it could serve as a safeguard against any diffusion of acetylcholine from synapses into the circulation. This chain is Acetylcholinesterase (ACHE), found in Naja oxiana (Central Asian cobra).